The chain runs to 389 residues: Acetoin utilization protein AcuC (389 aa).

Belongs to the histone deacetylase family.

Its pathway is ketone degradation; acetoin degradation. Role in growth on acetoin or butanediol. Involved in the breakdown of these compounds used as a carbon source. The sequence is that of Acetoin utilization protein AcuC (acuC) from Staphylococcus aureus (strain COL).